The chain runs to 551 residues: Cation/acetate symporter ActP (551 aa).

The next 14 membrane-spanning stretches (helical) occupy residues 5 to 25 (HWSA…ALTG), 34 to 54 (IQAI…TYWA), 77 to 97 (GLAI…SALV), 104 to 124 (GLIY…LIAE), 150 to 170 (LSAC…MVGA), 184 to 204 (VAVV…GMLA), 207 to 227 (WVQI…AIMV), 263 to 283 (ISAL…PHIL), 304 to 324 (GFIG…ILLV), 356 to 376 (FFLG…VAGL), 406 to 426 (VSKI…ILFE), 430 to 450 (IAFM…PIII), 469 to 489 (LGLS…VTIL), and 498 to 518 (YEYP…FFSI).

The protein belongs to the sodium:solute symporter (SSF) (TC 2.A.21) family.

The protein resides in the cell inner membrane. Its function is as follows. Transports acetate. This is Cation/acetate symporter ActP from Yersinia pseudotuberculosis serotype IB (strain PB1/+).